We begin with the raw amino-acid sequence, 332 residues long: L-lactate dehydrogenase C chain (332 aa).

NAD(+) contacts are provided by residues 29-57 and Arg-99; that span reads GAVG…AVDK. 3 residues coordinate substrate: Arg-106, Asn-138, and Arg-169. Asn-138 contributes to the NAD(+) binding site. Residue His-193 is the Proton acceptor of the active site. Thr-248 is a binding site for substrate. At Ser-301 the chain carries Phosphoserine.

It belongs to the LDH/MDH superfamily. LDH family. Homotetramer. Interacts with RABL2/RABL2A; binds preferentially to GTP-bound RABL2.

The protein localises to the cytoplasm. The catalysed reaction is (S)-lactate + NAD(+) = pyruvate + NADH + H(+). It participates in fermentation; pyruvate fermentation to lactate; (S)-lactate from pyruvate: step 1/1. Functionally, possible role in sperm motility. In Sus scrofa (Pig), this protein is L-lactate dehydrogenase C chain (LDHC).